The following is a 342-amino-acid chain: Transmembrane protein 268 (342 aa).

2 helical membrane-spanning segments follow: residues 106-126 (AFAV…SQMF) and 133-153 (AGVL…VLVF). The tract at residues 245-267 (VEGPEDLEDAPLLPSTPGPQERP) is disordered.

As to quaternary structure, interacts with ITGAM; this interaction inhibits ITGAM degradation via the endosome-lysosome pathway. Interacts with ITGB4; this interaction prevents ITGB4 degradation.

The protein resides in the cell membrane. Stabilizes cell surface expression of ITGAM and participates in the adhesion and migration of phagocytes during bacterial clearance. This Mus musculus (Mouse) protein is Transmembrane protein 268.